Reading from the N-terminus, the 262-residue chain is MTTPRQSSLEPLSIANWRWQPFLDHACGALQPLELEPYPVAPEFLLQTSQTGSKSKPVQVTTATWACKTNKLRQVRAACVEAGAAASVLNFVVNPSTSYDLPFFGADLVTLPAGHLLALDLQPALKTDAEHTKAVWERLMPIFERWQQRLPGGGPIPEEAKPYFSPGFLWTRIPLGSEGDALIEEAVKPAFRDYLELYLQLVHEAEEVSPERSAELLAGQKRYTSYRAEKDPARGMLTRFHGAEWTEAYIHGVLFDLDKKWM.

It belongs to the HY2 family.

The enzyme catalyses (3Z)-phycoerythrobilin + oxidized 2[4Fe-4S]-[ferredoxin] = 15,16-dihydrobiliverdin + reduced 2[4Fe-4S]-[ferredoxin] + 2 H(+). In terms of biological role, catalyzes the two-electron reduction of the C2 and C3(1) diene system of 15,16-dihydrobiliverdin. The chain is Phycoerythrobilin:ferredoxin oxidoreductase from Synechococcus sp. (strain RCC307).